Reading from the N-terminus, the 272-residue chain is Putative phosphoenolpyruvate synthase regulatory protein (272 aa).

Position 152–159 (152–159 (GVSRCGKT)) interacts with ADP.

It belongs to the pyruvate, phosphate/water dikinase regulatory protein family. PSRP subfamily.

The enzyme catalyses [pyruvate, water dikinase] + ADP = [pyruvate, water dikinase]-phosphate + AMP + H(+). It carries out the reaction [pyruvate, water dikinase]-phosphate + phosphate + H(+) = [pyruvate, water dikinase] + diphosphate. Functionally, bifunctional serine/threonine kinase and phosphorylase involved in the regulation of the phosphoenolpyruvate synthase (PEPS) by catalyzing its phosphorylation/dephosphorylation. The protein is Putative phosphoenolpyruvate synthase regulatory protein of Pseudomonas putida (strain ATCC 700007 / DSM 6899 / JCM 31910 / BCRC 17059 / LMG 24140 / F1).